We begin with the raw amino-acid sequence, 413 residues long: Probable Xaa-Pro aminopeptidase UREG_07123 (413 aa).

4 residues coordinate Mn(2+): D194, D205, E340, and E379.

The protein belongs to the peptidase M24B family. It depends on Mn(2+) as a cofactor.

The enzyme catalyses Release of any N-terminal amino acid, including proline, that is linked to proline, even from a dipeptide or tripeptide.. Catalyzes the removal of a penultimate prolyl residue from the N-termini of peptides. The protein is Probable Xaa-Pro aminopeptidase UREG_07123 of Uncinocarpus reesii (strain UAMH 1704).